A 365-amino-acid chain; its full sequence is Aminomethyltransferase (365 aa).

This sequence belongs to the GcvT family. The glycine cleavage system is composed of four proteins: P, T, L and H.

It catalyses the reaction N(6)-[(R)-S(8)-aminomethyldihydrolipoyl]-L-lysyl-[protein] + (6S)-5,6,7,8-tetrahydrofolate = N(6)-[(R)-dihydrolipoyl]-L-lysyl-[protein] + (6R)-5,10-methylene-5,6,7,8-tetrahydrofolate + NH4(+). In terms of biological role, the glycine cleavage system catalyzes the degradation of glycine. This is Aminomethyltransferase from Yersinia enterocolitica serotype O:8 / biotype 1B (strain NCTC 13174 / 8081).